A 514-amino-acid polypeptide reads, in one-letter code: MKRGLEEEIEEMSEEEVGVNNNNNGKKKKKKVVKKSKPVPLTKSVPQVSSQPLRPTKLVPKKKTEIREININDIGSNELSVADQRVEADGVLAGLISPTIIEDFYDQYFGQKHLYVKRNGDNIYKNFFTKDSLDKMLRNNLMKFTENVDVTNYVDFQRITLNPEGRAYPSLVWKHYKEGCSVRLLNPQTFNSNVWKLCSTLQTHFQCGVGANIYLTPAGAQGFAPHYDDVDVFILQLEGKKEWRLYKPRDANEVLPKKSSENFTQEEIGEPYFTVTLEAGDLLYFPRGVIHQAVSPSDVHSLHITVSTYLNNTWGDLIGKVLNRALEIANEECLEFREGLPRDYTQYLGVIHSDKVGDERRKELTDKVGTLWDKLGQLLPIDIGADQMAVKYLLDSLPPVLTQLEKKHSIEDETTSMKIKPETRFRLIRADSVRLVVEDIAILFHNADNTRIYHQVGEEPGVVEFTLECVDALEHIIDSYPSYIYTKDLPIEDDDQKLDVVSALYEKGLIMFEK.

The disordered stretch occupies residues 1 to 53; that stretch reads MKRGLEEEIEEMSEEEVGVNNNNNGKKKKKKVVKKSKPVPLTKSVPQVSSQPL. A compositionally biased stretch (acidic residues) spans 7-17; sequence EEIEEMSEEEV. A compositionally biased stretch (basic residues) spans 25–37; sequence GKKKKKKVVKKSK. Over residues 44–53 the composition is skewed to polar residues; the sequence is SVPQVSSQPL. Residues 180–327 form the JmjC domain; the sequence is CSVRLLNPQT…IGKVLNRALE (148 aa). Fe cation is bound by residues His226, Asp228, and His291.

The protein belongs to the ROX family. NO66 subfamily. The cofactor is Fe(2+).

The protein localises to the nucleus. The catalysed reaction is N(6),N(6)-dimethyl-L-lysyl(36)-[histone H3] + 2 2-oxoglutarate + 2 O2 = L-lysyl(36)-[histone H3] + 2 formaldehyde + 2 succinate + 2 CO2. Oxygenase that can act as both a histone lysine demethylase and a ribosomal histidine hydroxylase. Specifically demethylates 'Lys-4' (H3K4me) and 'Lys-36' (H3K36me) of histone H3, thereby playing a central role in histone code. This is Bifunctional lysine-specific demethylase and histidyl-hydroxylase NO66 (jcdg) from Dictyostelium discoideum (Social amoeba).